The primary structure comprises 88 residues: Small ribosomal subunit protein bS20 (88 aa).

2 disordered regions span residues 1–25 (MPNI…KAVK) and 68–88 (HKNQ…SLAA).

The protein belongs to the bacterial ribosomal protein bS20 family.

Functionally, binds directly to 16S ribosomal RNA. This chain is Small ribosomal subunit protein bS20, found in Cutibacterium acnes (strain DSM 16379 / KPA171202) (Propionibacterium acnes).